We begin with the raw amino-acid sequence, 345 residues long: Protein sdf-9 (345 aa).

The Tyrosine-protein phosphatase domain occupies 33–284 (NRNRVVKIVP…SFIYEAVLDY (252 aa)).

It belongs to the protein-tyrosine phosphatase family. As to expression, expressed in the 2 embryonic head hypodermal cells XXXL/R.

The protein localises to the cytoplasm. Its subcellular location is the cell membrane. Together with eak-4 and phosphatase eak-6, negatively regulates dauer larva formation downstream of insulin-like receptor daf-2 and in parallel of age-1, pdk-1 and akt-1. This Caenorhabditis elegans protein is Protein sdf-9.